We begin with the raw amino-acid sequence, 145 residues long: Plastocyanin, chloroplastic (145 aa).

A chloroplast-targeting transit peptide spans 1-48; it reads MASLMRKAAVAPAKATRTTVKASASLQRVAQAAGVAVAGFSLALSANA. The 97-residue stretch at 49–145 folds into the Plastocyanin-like domain; that stretch reads ANVKLGADSG…AGMVGKVIVQ (97 aa). Cu cation contacts are provided by His-85, Cys-130, His-133, and Met-138.

Belongs to the plastocyanin family. It depends on Cu(2+) as a cofactor.

It is found in the plastid. The protein resides in the chloroplast thylakoid membrane. Its function is as follows. Participates in electron transfer between P700 and the cytochrome b6-f complex in photosystem I. This is Plastocyanin, chloroplastic (PETE) from Tetradesmus obliquus (Green alga).